A 961-amino-acid chain; its full sequence is Outer capsid protein VP2 (961 aa).

It belongs to the orbivirus VP2 family.

The protein resides in the virion. Its function is as follows. The VP2 protein is one of the two proteins (with VP5) which constitute the virus particle outer capsid. It is the major target of the host immunogenic response. Responsible for viral attachment to target host cell, probably by binding to sialic acid. This attachment induces virion internalization predominantly through clathrin-dependent endocytosis. This is Outer capsid protein VP2 (Segment-2) from Antilocapra americana (Pronghorn).